Here is a 362-residue protein sequence, read N- to C-terminus: UDP-arabinopyranose mutase 3 (362 aa).

A DXD motif motif is present at residues 106–108 (DDD). Arg-154 is a glycosylation site (N-linked (Glc...) arginine).

Belongs to the RGP family. Heterodimer with RGP1. Mn(2+) serves as cofactor. Mg(2+) is required as a cofactor. Reversibly glycosylated in vitro by UDP-glucose, UDP-xylose and UDP-galactose, but not UDP-mannose. In terms of tissue distribution, specifically expressed in developing seeds.

Its subcellular location is the cytoplasm. The protein localises to the cytosol. It localises to the golgi apparatus. It carries out the reaction UDP-beta-L-arabinofuranose = UDP-beta-L-arabinopyranose. In terms of biological role, UDP-L-arabinose mutase involved in the biosynthesis of cell wall non-cellulosic polysaccharides. Catalyzes the interconvertion of UDP-L-arabinopyranose (UDP-Arap) and UDP-L-arabinofuranose (UDP-Araf). Preferentially catalyzes the formation of UDP-Arap from UDP-Araf. At thermodynamic equilibrium in vitro the ratio of the pyranose form over the furanose form is 95:5. Is not active on other UDP-sugars (UDP-Gal, UDP-Xyl, UDP-Glc, GDP-Man and GDP-Fuc). Is probably active as heteromer in vivo. The chain is UDP-arabinopyranose mutase 3 from Arabidopsis thaliana (Mouse-ear cress).